The following is a 178-amino-acid chain: Nucleoside triphosphate/diphosphate phosphatase (178 aa).

The active-site Proton donor is Arg-23. Residues Asn-87, Asp-103, Asp-105, Asp-107, Asp-120, and Glu-123 each contribute to the Mg(2+) site.

Belongs to the Ntdp family. Mg(2+) serves as cofactor.

The catalysed reaction is a ribonucleoside 5'-triphosphate + H2O = a ribonucleoside 5'-diphosphate + phosphate + H(+). It carries out the reaction a ribonucleoside 5'-diphosphate + H2O = a ribonucleoside 5'-phosphate + phosphate + H(+). Has nucleoside phosphatase activity towards nucleoside triphosphates and nucleoside diphosphates. This chain is Nucleoside triphosphate/diphosphate phosphatase, found in Latilactobacillus sakei subsp. sakei (strain 23K) (Lactobacillus sakei subsp. sakei).